Here is a 202-residue protein sequence, read N- to C-terminus: Large ribosomal subunit protein bL17 (202 aa).

Low complexity predominate over residues 130-142; the sequence is AAPAATAPAPVEE. Residues 130-202 are disordered; the sequence is AAPAATAPAP…TEESTEDDKA (73 aa). Composition is skewed to acidic residues over residues 143–168 and 177–202; these read APAE…EASP and QPVE…DDKA.

It belongs to the bacterial ribosomal protein bL17 family. As to quaternary structure, part of the 50S ribosomal subunit. Contacts protein L32.

This is Large ribosomal subunit protein bL17 from Nocardioides sp. (strain ATCC BAA-499 / JS614).